A 654-amino-acid chain; its full sequence is Chaperone protein HtpG (654 aa).

The segment at 1–344 (MTVENAPQRE…SDDLPLNVSR (344 aa)) is a; substrate-binding. The tract at residues 345–556 (ELLQDSQVVR…EGGSPAYLER (212 aa)) is b. The interval 557–654 (LLQQRGRGAG…AQTPASATAS (98 aa)) is c.

Belongs to the heat shock protein 90 family. As to quaternary structure, homodimer.

It is found in the cytoplasm. In terms of biological role, molecular chaperone. Has ATPase activity. The protein is Chaperone protein HtpG of Myxococcus xanthus (strain DK1622).